Here is an 836-residue protein sequence, read N- to C-terminus: Pentatricopeptide repeat-containing protein At1g79490, mitochondrial (836 aa).

A mitochondrion-targeting transit peptide spans 1 to 85; it reads MIRGRTAKVI…QCRSIVRRFC (85 aa). PPR repeat units lie at residues 204 to 238, 242 to 276, 277 to 311, 312 to 346, 347 to 381, 382 to 416, 417 to 451, 452 to 486, 487 to 521, 528 to 555, 556 to 590, and 591 to 625; these read SDEC…SSSH, SFNA…GCKI, DTQT…DSLL, DGST…KLRP, SFSV…GHRP, SATM…GFRP, NFGL…GFLP, TPST…GLRP, GLSS…GYSV, VLMI…GIKT, NNFI…AGKV, and DLVL…KHKA. Residues 710 to 786 enclose the Smr domain; the sequence is LDVRNLSVGA…APGELVMEWF (77 aa).

This sequence belongs to the PPR family. P subfamily.

The protein resides in the mitochondrion. This Arabidopsis thaliana (Mouse-ear cress) protein is Pentatricopeptide repeat-containing protein At1g79490, mitochondrial (EMB2217).